Here is an 860-residue protein sequence, read N- to C-terminus: DNA mismatch repair protein MutS (860 aa).

G618 to S625 provides a ligand contact to ATP.

This sequence belongs to the DNA mismatch repair MutS family.

Its function is as follows. This protein is involved in the repair of mismatches in DNA. It is possible that it carries out the mismatch recognition step. This protein has a weak ATPase activity. In Shewanella piezotolerans (strain WP3 / JCM 13877), this protein is DNA mismatch repair protein MutS.